The chain runs to 562 residues: NAD-dependent malic enzyme (562 aa).

Tyrosine 101 (proton donor) is an active-site residue. NAD(+) is bound at residue arginine 154. The active-site Proton acceptor is lysine 172. 3 residues coordinate a divalent metal cation: glutamate 243, aspartate 244, and aspartate 267. Aspartate 267 and asparagine 415 together coordinate NAD(+).

Belongs to the malic enzymes family. As to quaternary structure, homotetramer. Mg(2+) serves as cofactor. Requires Mn(2+) as cofactor.

It catalyses the reaction (S)-malate + NAD(+) = pyruvate + CO2 + NADH. The catalysed reaction is oxaloacetate + H(+) = pyruvate + CO2. This is NAD-dependent malic enzyme from Shewanella denitrificans (strain OS217 / ATCC BAA-1090 / DSM 15013).